A 156-amino-acid chain; its full sequence is MIIKNLQEFYRLLIPNEPLIAIDYGSKKIGVALSDQALAIAMPLNTITELNQRVIITSLLNIIEKYQVCGIVIGLPIDMSGGVTKQTNIVMKFADKLKQSVSLPIYLQDERLTTKSANNFLKSFGIKRKDRNNNDDAVAASMILEIVLNAIKRFNL.

Belongs to the YqgF nuclease family.

The protein resides in the cytoplasm. Could be a nuclease involved in processing of the 5'-end of pre-16S rRNA. In Rickettsia typhi (strain ATCC VR-144 / Wilmington), this protein is Putative pre-16S rRNA nuclease.